The chain runs to 390 residues: MGSSLCVAVRKKEKQKQKKTVVFLPEIPEEMLIDILIRLPAKSLMRFKCVSKLWLSLITSRYFTNRFFKPSSPSCLFAYLVDRENQSKYLLLQSSSSSRHDHSDTSVSVIDQHSTIPIMGGYLVNAARGLLCYRTGRRVKVCNPSTRQIVELPIMRSKTNVWNWFGHDPFHDEYKVLSLFWEVTKEQTVVRSEHQVLVLGVGASWRNTKSHHTPHRPFHPYSRGMTIDGVLYYSARTDANRCVLMSFDLSSEEFNLIELPFENWSRTIHMNYQGKVATCQYMRLASDGFVDVCVLEDADKSQWSNKKTFVLPISQMNFVHGDRLVVGASRDSGKVLMRKANLLRNQHARFFLYDMERNEIARRIEIRPSLLGSFNKTNQFLKVCYTFQTK.

The F-box domain maps to 21–71 (VVFLPEIPEEMLIDILIRLPAKSLMRFKCVSKLWLSLITSRYFTNRFFKPS).

In Arabidopsis thaliana (Mouse-ear cress), this protein is Putative F-box protein At3g52320.